The chain runs to 318 residues: Acetyl-coenzyme A carboxylase carboxyl transferase subunit alpha (318 aa).

Positions 34 to 295 (SIEEEITKLR…KATIKQQLAQ (262 aa)) constitute a CoA carboxyltransferase C-terminal domain.

This sequence belongs to the AccA family. As to quaternary structure, acetyl-CoA carboxylase is a heterohexamer composed of biotin carboxyl carrier protein (AccB), biotin carboxylase (AccC) and two subunits each of ACCase subunit alpha (AccA) and ACCase subunit beta (AccD).

The protein localises to the cytoplasm. The catalysed reaction is N(6)-carboxybiotinyl-L-lysyl-[protein] + acetyl-CoA = N(6)-biotinyl-L-lysyl-[protein] + malonyl-CoA. It functions in the pathway lipid metabolism; malonyl-CoA biosynthesis; malonyl-CoA from acetyl-CoA: step 1/1. Functionally, component of the acetyl coenzyme A carboxylase (ACC) complex. First, biotin carboxylase catalyzes the carboxylation of biotin on its carrier protein (BCCP) and then the CO(2) group is transferred by the carboxyltransferase to acetyl-CoA to form malonyl-CoA. The sequence is that of Acetyl-coenzyme A carboxylase carboxyl transferase subunit alpha from Pseudoalteromonas atlantica (strain T6c / ATCC BAA-1087).